The primary structure comprises 576 residues: MSVACTIRRHIIEKLHVLNIDNFVVTNESILAKLIVDYPNNPDHGDLYTNAALILSKYIKKNPMDIAKILVDEFSSIKEISDINVVKPGFINFNISLDVWYEIIISINRLKEKFGHVNFGNGKRVNIEFVSANPTGPMHIGHARGAIFGDVLANLLERVGYEVVREYYINDAGAQIDVLVESVYLRYKEVLGENIVIGSGLYPGLYLKDIGKLLYQEYDSGLLGMDYSQRRRIIRDVSLMYLMKLIKEDLALLGIKHDIFTSESQLQKDNIVQKCVELLQEKQLIYYGTLDQPKGTEGINWKPRTQMLFKSTDFGDDVDRALQKADGSWTYFANDIAYHFYKISRGFQHMILELGSDHIGYVKRLKAAVKALSDGNATIDIKLHSIVNFLDNGAQVKMSKRSGEFLTIKDVIEKVGKDVVRFIMLTRKSDVVLDFDFAKVVEQSKNNPVFYVQYAHARVHSLIRNAPKILEIELVDFSVLSSKEEILLIKLLAKWQDIVEISAKTAEPHRITFYLIEIAEAFHALWGYGNKSTDMRFIVDNNINLTSARIYLAKSVGYVIASGLTIFSIVPLTEMK.

A 'HIGH' region motif is present at residues 132–142 (ANPTGPMHIGH).

Belongs to the class-I aminoacyl-tRNA synthetase family. As to quaternary structure, monomer.

Its subcellular location is the cytoplasm. The enzyme catalyses tRNA(Arg) + L-arginine + ATP = L-arginyl-tRNA(Arg) + AMP + diphosphate. The sequence is that of Arginine--tRNA ligase from Ehrlichia ruminantium (strain Welgevonden).